Here is a 319-residue protein sequence, read N- to C-terminus: Sulfate adenylyltransferase subunit 2 (319 aa).

Belongs to the PAPS reductase family. CysD subfamily. As to quaternary structure, heterodimer composed of CysD, the smaller subunit, and CysN.

It carries out the reaction sulfate + ATP + H(+) = adenosine 5'-phosphosulfate + diphosphate. It participates in sulfur metabolism; hydrogen sulfide biosynthesis; sulfite from sulfate: step 1/3. Its function is as follows. With CysN forms the ATP sulfurylase (ATPS) that catalyzes the adenylation of sulfate producing adenosine 5'-phosphosulfate (APS) and diphosphate, the first enzymatic step in sulfur assimilation pathway. APS synthesis involves the formation of a high-energy phosphoric-sulfuric acid anhydride bond driven by GTP hydrolysis by CysN coupled to ATP hydrolysis by CysD. This Methylobacterium radiotolerans (strain ATCC 27329 / DSM 1819 / JCM 2831 / NBRC 15690 / NCIMB 10815 / 0-1) protein is Sulfate adenylyltransferase subunit 2.